The sequence spans 127 residues: uncharacterized protein (127 aa).

Residues 1–13 (MEAGNRSGTPQHR) show a composition bias toward polar residues. Positions 1 to 26 (MEAGNRSGTPQHRQLSEIRQDLSSSP) are disordered.

This is an uncharacterized protein from Saccharomyces cerevisiae (strain ATCC 204508 / S288c) (Baker's yeast).